The following is a 369-amino-acid chain: Glutamate 5-kinase (369 aa).

K9 provides a ligand contact to ATP. The substrate site is built by S49, D136, and N148. Residues 168-169 (TD) and 210-216 (TGGMLTK) each bind ATP. One can recognise a PUA domain in the interval 275-355 (RGGVYVDEGA…KGVFIHRDDW (81 aa)).

The protein belongs to the glutamate 5-kinase family.

The protein resides in the cytoplasm. The catalysed reaction is L-glutamate + ATP = L-glutamyl 5-phosphate + ADP. Its pathway is amino-acid biosynthesis; L-proline biosynthesis; L-glutamate 5-semialdehyde from L-glutamate: step 1/2. In terms of biological role, catalyzes the transfer of a phosphate group to glutamate to form L-glutamate 5-phosphate. The sequence is that of Glutamate 5-kinase from Neisseria meningitidis serogroup A / serotype 4A (strain DSM 15465 / Z2491).